The primary structure comprises 1988 residues: MKGQQFKLWILEFREIKNSHYFLDSWTQFNSLGSFIHIFFHQERFIKLLDSRIWSILLSRNSQGSTSNRYFTIKGVVLFVVAVVLIYRINNRKMVERKNLYLTGFLPIPMNFIGPRNDTLEESFGSSNINRLIVLLLYLPTSFVQVTDSSQLKGSSDQSRDHFDSISNEDSEYHTLINQKEIQQPLPEEIEEFLGNPTRSIRSFFSDRWSELHMGSNPIERSTRDQKLLKKEQDVSFVPSRRSENKEIVNIFKIITYLQNTVSIHPISSDPGCDMVPKDELDMDSSNKISFLKKNPFIYLFHLFHDRNRRGYTLHHDFESEERFQEMADLFTLSITEPDLVYHKGFAFSIDSYGLDQKQFLNEVFNSRDESKKKYLLVLPPIFYEENDSFYRRIRKKWVRTSPGNDLEDPKQKIVVFASNNIMEAVNQYRLIRNLIQIQYYRYIRNVLNRFFLMNRSDRDLEYGIQRDQIGNDTLNHRTIMKYTINQHLSNFKKGQKKWFDPLILISRTERSMNRDPNAYRYKWSNGSKNFQEHFISEQKSHFHFQVVFDRLRINQYSIDWSEVIDKKDWSKSLRFFLSKLLVFLSKFLLFLSNSLPFFFVSFGNIPIHRSEIHIYELKGPNDRLCNQLLESIGLQIVHLKKLKPFLLDDHYTSQKSKFLINGGTISPFLFNKIPKWMIDSFDTRNNRRKSFDNTDSYFSMISHDQDNWLNPVKPFHRSSLISSFYKATRLRFLNNPHHFCFYCNKRFPFYVDYVEKARINNYDFTYGQFLNILFIRNKIFSLCGGKKKHAFLERDTISPIESQVSNIFIPNDFPQSGDERYNLYKSFHFPIRSNPFVRRAIYSIADISVTPLTEGQIVNFERTYCQPLSDMNLSDSEGKNLHQYLNFNSNMGLIHTPCSEKYLPSEKRKKQSLYRKKCLEKGQMYRTFQRDSAFSTLSKWNLFQTYMPWFFTSTGYKYLNLLFLDTFSDLLPILSSSPKFVSIFDDIMHRSDRSWRILRKKLCLPQWNLISEISIKCLPNLLLSEEMIHRNNESPSISTHLRSPNVREFLYSILFLLLIAVYLVRTHLLFVSRAYSELQTEFEKVKSLMIPSYMIELRKLLDRYPTYERNSFWLKNLFLVALEQLGDSLEEIWGSASGGGPAYGVKSIRSKKKDWNINLINLISIIPNPINRIAFSRNTRHLSHTSKEIYSLIRKNVNGDWIDDKIQSWVWNSDSIDDKEREFLVQFSTLTTEKRIDQILLSLTHSDHLSKNDSGYQMIEQPGVIYLRYLVDIQKKYLMNYKFNTSCLAERRTFLAHYQTITHSQTSCGANSFHFPSHGKLFSLRLALSPGILVIGSIGTGRSYLVKYLATNSYLPFITVFLNKFRDNKPKFIDDSDDDSDDIDDSGDIDDSDDIDRDLDIDTELELLTMMNALTMEMKLEIDQFYITLQFELIKAMSPCIIWIPNIHDLYVNKSSHLYFGLLVNYLYRDFERCSTTNILVIASTHIPQKVDPALIAPNKLNTCIKIRRLLIPQQRKHFFTLSYTRGFHLEKKMFHTNGFGSITMGSNVRDLVALTNEALSISITQRKSIIDTNIIRSALHRQTWDLRSQVRSVQDHGILFYQIGRALAQNVLLSNCSIDPISIYMKKKSCNEGGSYLYNWYFELETSMKKLTILLYLLNCSAGSVVQDLWSLSGPDEKNGITSYVLVENDSHLVHGLLEVEGALFGSSWTEKDCSRFDNDRVTLLLRPEPRNPLDMIQNGSSSIVDQIFLYQKYESKFEEGEGVLDPQQIEEDLFNHIVWAPRIWSPWGFLFDCIERPNELGVPYWARSFRGKRIIYDEEDELQENDSEFLQSGTVQYQTRDRSSKEQGFFLINQFIWDPADPLFFLFQDHPFVSVFSHREFFADEEMAKGLLTSQPAFPTSLEKRWFINIKNTQEKYVELLIHRQRWLRTRTNSSLSKSNGFFRSNTLSESYQYLSNLFLSNGTLLDQMTKTLLRKRWLFPDEMK.

1337 to 1344 contributes to the ATP binding site; sequence GSIGTGRS. The disordered stretch occupies residues 1377–1396; it reads SDDDSDDIDDSGDIDDSDDI.

This sequence belongs to the Ycf2 family.

The protein resides in the plastid. It is found in the chloroplast stroma. Its function is as follows. Probable ATPase of unknown function. Its presence in a non-photosynthetic plant (Epifagus virginiana) and experiments in tobacco indicate that it has an essential function which is probably not related to photosynthesis. The polypeptide is Protein Ycf2 (Cucumis sativus (Cucumber)).